The sequence spans 415 residues: Putative serine/threonine-protein phosphatase 4 regulatory subunit 1-like (415 aa).

HEAT repeat units lie at residues 86–124 (VMEIVVRLSEDAEPTVRTELMEQIPPIAIFLQENRSNFP), 163–202 (LLPRFCELCGDRKLFQVRKVCAANFGDICHAVGQEATEKF), 203–241 (LIPKFFELCSDAVWGMRKACAECFTAVSHSSSPGVRRTQ), and 242–280 (LFPLFIRLVSDPCRWVHQAAFQSLGPFTSTFANPSRAGL). The segment covering 301–318 (FASGSPAPSSGGNTSPAS) has biased composition (low complexity). Residues 301 to 362 (FASGSPAPSS…GPAESPVESC (62 aa)) are disordered.

In terms of biological role, may be a regulatory subunit of serine/threonine-protein phosphatase 4. The protein is Putative serine/threonine-protein phosphatase 4 regulatory subunit 1-like (PPP4R1L) of Homo sapiens (Human).